Here is a 476-residue protein sequence, read N- to C-terminus: Glucose-1-phosphate adenylyltransferase (476 aa).

Alpha-D-glucose 1-phosphate is bound by residues tyrosine 114, glycine 179, 194–195, and serine 212; that span reads EK.

It belongs to the bacterial/plant glucose-1-phosphate adenylyltransferase family. Homotetramer.

The enzyme catalyses alpha-D-glucose 1-phosphate + ATP + H(+) = ADP-alpha-D-glucose + diphosphate. The protein operates within glycan biosynthesis; glycogen biosynthesis. In terms of biological role, involved in the biosynthesis of ADP-glucose, a building block required for the elongation reactions to produce glycogen. Catalyzes the reaction between ATP and alpha-D-glucose 1-phosphate (G1P) to produce pyrophosphate and ADP-Glc. This Yersinia pestis protein is Glucose-1-phosphate adenylyltransferase.